A 769-amino-acid chain; its full sequence is Glutathione biosynthesis bifunctional protein GshAB (769 aa).

The tract at residues 1-347 (MLDSFKEDPN…QLADENENNI (347 aa)) is glutamate--cysteine ligase. In terms of domain architecture, ATP-grasp spans 514–768 (KLVLAEHDIR…IGDKILDFLF (255 aa)). 541 to 599 (SLFEDKQIVVKPKSTNYGWGISIFKNKFTLEDYQEALNIAFSYDSSVIIEEFIPGDEFR) contacts ATP. 3 residues coordinate Mg(2+): Asp721, Glu738, and Asn740. Positions 721, 738, and 740 each coordinate Mn(2+).

In the N-terminal section; belongs to the glutamate--cysteine ligase type 1 family. Type 2 subfamily. Monomer. Requires Mg(2+) as cofactor. Mn(2+) is required as a cofactor.

It carries out the reaction L-cysteine + L-glutamate + ATP = gamma-L-glutamyl-L-cysteine + ADP + phosphate + H(+). The enzyme catalyses gamma-L-glutamyl-L-cysteine + glycine + ATP = glutathione + ADP + phosphate + H(+). It participates in sulfur metabolism; glutathione biosynthesis; glutathione from L-cysteine and L-glutamate: step 1/2. Its pathway is sulfur metabolism; glutathione biosynthesis; glutathione from L-cysteine and L-glutamate: step 2/2. Synthesizes glutathione from L-glutamate and L-cysteine via gamma-L-glutamyl-L-cysteine. The protein is Glutathione biosynthesis bifunctional protein GshAB of Listeria monocytogenes serovar 1/2a (strain ATCC BAA-679 / EGD-e).